Consider the following 563-residue polypeptide: ATP-dependent RNA helicase DeaD (563 aa).

The short motif at 13-41 (ATFADLQIHPRVLRAIGDVGYESPTAIQA) is the Q motif element. A Helicase ATP-binding domain is found at 44-215 (IPALMAGSDV…AKYLHDPFEV (172 aa)). 57-64 (AQTGTGKT) lines the ATP pocket. Residues 163-166 (DEAD) carry the DEAD box motif. The Helicase C-terminal domain maps to 226 to 385 (NISQSYIQVA…AQLPTVEDVN (160 aa)). 2 disordered regions span residues 441 to 470 (LMAP…PDLT) and 543 to 563 (YRPP…KHVG). A compositionally biased stretch (basic and acidic residues) spans 451–461 (RNRDQRRDRPQ). Basic residues predominate over residues 551–563 (RHNGGKPRRKHVG).

It belongs to the DEAD box helicase family. DeaD/CsdA subfamily.

The protein localises to the cytoplasm. It carries out the reaction ATP + H2O = ADP + phosphate + H(+). In terms of biological role, DEAD-box RNA helicase involved in various cellular processes at low temperature, including ribosome biogenesis, mRNA degradation and translation initiation. This Mycobacterium tuberculosis (strain CDC 1551 / Oshkosh) protein is ATP-dependent RNA helicase DeaD.